The sequence spans 227 residues: Triosephosphate isomerase (227 aa).

Substrate is bound at residue 6–8 (NLK). Catalysis depends on histidine 85, which acts as the Electrophile. Glutamate 152 acts as the Proton acceptor in catalysis. Substrate contacts are provided by glycine 158 and serine 188.

Belongs to the triosephosphate isomerase family. As to quaternary structure, homodimer.

The protein localises to the cytoplasm. It catalyses the reaction D-glyceraldehyde 3-phosphate = dihydroxyacetone phosphate. It participates in carbohydrate biosynthesis; gluconeogenesis. It functions in the pathway carbohydrate degradation; glycolysis; D-glyceraldehyde 3-phosphate from glycerone phosphate: step 1/1. Functionally, involved in the gluconeogenesis. Catalyzes stereospecifically the conversion of dihydroxyacetone phosphate (DHAP) to D-glyceraldehyde-3-phosphate (G3P). This chain is Triosephosphate isomerase, found in Campylobacter concisus (strain 13826).